The primary structure comprises 219 residues: Octanoyltransferase (219 aa).

The region spanning 32-207 (ENSQDEIWIV…TLSQELGLDK (176 aa)) is the BPL/LPL catalytic domain. Residues 71 to 78 (RGGQVTYH), 138 to 140 (SLG), and 151 to 153 (GLA) contribute to the substrate site. Cysteine 169 acts as the Acyl-thioester intermediate in catalysis.

The protein belongs to the LipB family.

It is found in the cytoplasm. It carries out the reaction octanoyl-[ACP] + L-lysyl-[protein] = N(6)-octanoyl-L-lysyl-[protein] + holo-[ACP] + H(+). It participates in protein modification; protein lipoylation via endogenous pathway; protein N(6)-(lipoyl)lysine from octanoyl-[acyl-carrier-protein]: step 1/2. In terms of biological role, catalyzes the transfer of endogenously produced octanoic acid from octanoyl-acyl-carrier-protein onto the lipoyl domains of lipoate-dependent enzymes. Lipoyl-ACP can also act as a substrate although octanoyl-ACP is likely to be the physiological substrate. In Shewanella pealeana (strain ATCC 700345 / ANG-SQ1), this protein is Octanoyltransferase.